The chain runs to 475 residues: Sulfate adenylyltransferase subunit 1 (475 aa).

The tr-type G domain maps to 25–239 (KSLLRFLTCG…EVLETVEIQR (215 aa)). A G1 region spans residues 34–41 (GSVDDGKS). 34 to 41 (GSVDDGKS) serves as a coordination point for GTP. A G2 region spans residues 92–96 (GITID). The interval 113-116 (DTPG) is G3. GTP-binding positions include 113–117 (DTPGH) and 168–171 (NKMD). The tract at residues 168–171 (NKMD) is G4. Positions 206-208 (SAL) are G5.

Belongs to the TRAFAC class translation factor GTPase superfamily. Classic translation factor GTPase family. CysN/NodQ subfamily. In terms of assembly, heterodimer composed of CysD, the smaller subunit, and CysN.

It carries out the reaction sulfate + ATP + H(+) = adenosine 5'-phosphosulfate + diphosphate. It participates in sulfur metabolism; hydrogen sulfide biosynthesis; sulfite from sulfate: step 1/3. In terms of biological role, with CysD forms the ATP sulfurylase (ATPS) that catalyzes the adenylation of sulfate producing adenosine 5'-phosphosulfate (APS) and diphosphate, the first enzymatic step in sulfur assimilation pathway. APS synthesis involves the formation of a high-energy phosphoric-sulfuric acid anhydride bond driven by GTP hydrolysis by CysN coupled to ATP hydrolysis by CysD. The sequence is that of Sulfate adenylyltransferase subunit 1 from Escherichia coli O127:H6 (strain E2348/69 / EPEC).